A 295-amino-acid chain; its full sequence is Ribosomal protein L11 methyltransferase (295 aa).

4 residues coordinate S-adenosyl-L-methionine: T145, G166, D188, and N230.

The protein belongs to the methyltransferase superfamily. PrmA family.

The protein localises to the cytoplasm. The enzyme catalyses L-lysyl-[protein] + 3 S-adenosyl-L-methionine = N(6),N(6),N(6)-trimethyl-L-lysyl-[protein] + 3 S-adenosyl-L-homocysteine + 3 H(+). Functionally, methylates ribosomal protein L11. This is Ribosomal protein L11 methyltransferase from Pectobacterium carotovorum subsp. carotovorum (strain PC1).